A 229-amino-acid polypeptide reads, in one-letter code: ATP-dependent Clp protease proteolytic subunit (229 aa).

Residue S101 is the Nucleophile of the active site. H126 is a catalytic residue.

The protein belongs to the peptidase S14 family. As to quaternary structure, component of the chloroplastic Clp protease core complex.

The protein localises to the plastid. The protein resides in the chloroplast stroma. It carries out the reaction Hydrolysis of proteins to small peptides in the presence of ATP and magnesium. alpha-casein is the usual test substrate. In the absence of ATP, only oligopeptides shorter than five residues are hydrolyzed (such as succinyl-Leu-Tyr-|-NHMec, and Leu-Tyr-Leu-|-Tyr-Trp, in which cleavage of the -Tyr-|-Leu- and -Tyr-|-Trp bonds also occurs).. In terms of biological role, cleaves peptides in various proteins in a process that requires ATP hydrolysis. Has a chymotrypsin-like activity. Plays a major role in the degradation of misfolded proteins. The protein is ATP-dependent Clp protease proteolytic subunit of Mesostigma viride (Green alga).